The primary structure comprises 262 residues: Shikimate dehydrogenase (NADP(+)) (262 aa).

Shikimate contacts are provided by residues 15–17 (SRS) and Thr62. The active-site Proton acceptor is Lys66. Glu78 serves as a coordination point for NADP(+). Residues Asn87 and Asp102 each contribute to the shikimate site. NADP(+) is bound by residues 126-130 (GAGGA), 150-155 (NRTQQR), and Met214. Tyr216 provides a ligand contact to shikimate. Gly236 lines the NADP(+) pocket.

It belongs to the shikimate dehydrogenase family. Homodimer.

The catalysed reaction is shikimate + NADP(+) = 3-dehydroshikimate + NADPH + H(+). The protein operates within metabolic intermediate biosynthesis; chorismate biosynthesis; chorismate from D-erythrose 4-phosphate and phosphoenolpyruvate: step 4/7. Its function is as follows. Involved in the biosynthesis of the chorismate, which leads to the biosynthesis of aromatic amino acids. Catalyzes the reversible NADPH linked reduction of 3-dehydroshikimate (DHSA) to yield shikimate (SA). The chain is Shikimate dehydrogenase (NADP(+)) from Acinetobacter baylyi (strain ATCC 33305 / BD413 / ADP1).